The sequence spans 351 residues: Putative ABC transporter permease protein MJ0876 (351 aa).

Helical transmembrane passes span 4-24 (VGIL…ALYL), 59-79 (LPPI…GLML), 99-119 (VLMV…FEIF), 124-144 (ILVA…IIAL), 152-172 (VIIV…YLIA), 196-216 (GDVI…MFLI), 249-269 (FITG…IIAP), 284-304 (LVPA…ILSL), and 322-342 (PLPI…YLVY).

It belongs to the binding-protein-dependent transport system permease family. FecCD subfamily.

The protein resides in the cell membrane. In terms of biological role, probably part of a binding-protein-dependent transport system. Probably responsible for the translocation of the substrate across the membrane. This is Putative ABC transporter permease protein MJ0876 from Methanocaldococcus jannaschii (strain ATCC 43067 / DSM 2661 / JAL-1 / JCM 10045 / NBRC 100440) (Methanococcus jannaschii).